Consider the following 187-residue polypeptide: Large ribosomal subunit protein bL17 (187 aa).

Residues 122–187 (PKVRSSRTST…EADAAEKSDK (66 aa)) are disordered. Low complexity predominate over residues 127-144 (SRTSTATAPAAAAPAAEA). Acidic residues-rich tracts occupy residues 145–157 (PAEE…EETD) and 165–180 (TPAE…VEAD).

It belongs to the bacterial ribosomal protein bL17 family. Part of the 50S ribosomal subunit. Contacts protein L32.

The chain is Large ribosomal subunit protein bL17 from Clavibacter michiganensis subsp. michiganensis (strain NCPPB 382).